The following is a 200-amino-acid chain: Large ribosomal subunit protein uL29 (200 aa).

The tract at residues 1–107 (MTIAKELKQK…KQETKKAEVK (107 aa)) is large ribosomal subunit protein uL29. Positions 92–200 (STKPESKQET…KMIKTKEKKQ (109 aa)) are disordered. The span at 93–179 (TKPESKQETK…QEVKKVEAKK (87 aa)) shows a compositional bias: basic and acidic residues. The interval 108 to 200 (PKVESKPESK…KMIKTKEKKQ (93 aa)) is unknown. Residues 186-200 (KPVKAKMIKTKEKKQ) show a composition bias toward basic residues.

Belongs to the universal ribosomal protein uL29 family.

The chain is Large ribosomal subunit protein uL29 from Mycoplasma genitalium (strain ATCC 33530 / DSM 19775 / NCTC 10195 / G37) (Mycoplasmoides genitalium).